Reading from the N-terminus, the 388-residue chain is Succinate--CoA ligase [ADP-forming] subunit beta (388 aa).

Positions K9 to Q244 constitute an ATP-grasp domain. Residues K46, G53 to G55, E99, T102, and E107 contribute to the ATP site. Mg(2+) is bound by residues N199 and D213. Substrate-binding positions include N264 and G321–V323.

The protein belongs to the succinate/malate CoA ligase beta subunit family. Heterotetramer of two alpha and two beta subunits. Mg(2+) is required as a cofactor.

It catalyses the reaction succinate + ATP + CoA = succinyl-CoA + ADP + phosphate. The enzyme catalyses GTP + succinate + CoA = succinyl-CoA + GDP + phosphate. The protein operates within carbohydrate metabolism; tricarboxylic acid cycle; succinate from succinyl-CoA (ligase route): step 1/1. Succinyl-CoA synthetase functions in the citric acid cycle (TCA), coupling the hydrolysis of succinyl-CoA to the synthesis of either ATP or GTP and thus represents the only step of substrate-level phosphorylation in the TCA. The beta subunit provides nucleotide specificity of the enzyme and binds the substrate succinate, while the binding sites for coenzyme A and phosphate are found in the alpha subunit. The protein is Succinate--CoA ligase [ADP-forming] subunit beta of Enterobacter sp. (strain 638).